The chain runs to 576 residues: Arginine--tRNA ligase (576 aa).

A 'HIGH' region motif is present at residues 122–132 (PNVAKQMHVGH).

This sequence belongs to the class-I aminoacyl-tRNA synthetase family. As to quaternary structure, monomer.

The protein resides in the cytoplasm. The catalysed reaction is tRNA(Arg) + L-arginine + ATP = L-arginyl-tRNA(Arg) + AMP + diphosphate. This chain is Arginine--tRNA ligase, found in Yersinia pseudotuberculosis serotype O:1b (strain IP 31758).